The primary structure comprises 357 residues: Histidinol-phosphate aminotransferase 2 (357 aa).

Lys-216 carries the N6-(pyridoxal phosphate)lysine modification.

Belongs to the class-II pyridoxal-phosphate-dependent aminotransferase family. Histidinol-phosphate aminotransferase subfamily. Homodimer. Pyridoxal 5'-phosphate is required as a cofactor.

It carries out the reaction L-histidinol phosphate + 2-oxoglutarate = 3-(imidazol-4-yl)-2-oxopropyl phosphate + L-glutamate. It participates in amino-acid biosynthesis; L-histidine biosynthesis; L-histidine from 5-phospho-alpha-D-ribose 1-diphosphate: step 7/9. This Idiomarina loihiensis (strain ATCC BAA-735 / DSM 15497 / L2-TR) protein is Histidinol-phosphate aminotransferase 2.